The primary structure comprises 300 residues: Acetaldehyde dehydrogenase 3 (300 aa).

11 to 14 lines the NAD(+) pocket; the sequence is SGNI. Cys-126 acts as the Acyl-thioester intermediate in catalysis. Residues 157–165 and Asn-276 each bind NAD(+); that span reads SAGPGTRAN.

Belongs to the acetaldehyde dehydrogenase family.

The enzyme catalyses acetaldehyde + NAD(+) + CoA = acetyl-CoA + NADH + H(+). The protein is Acetaldehyde dehydrogenase 3 of Rhodococcus opacus (strain B4).